The following is a 157-amino-acid chain: Protein EOLA1 (157 aa).

The 87-residue stretch at 6 to 92 (LSFRQPYAGL…IAGLIDIGET (87 aa)) folds into the ASCH domain.

Belongs to the EOLA family. Interacts with MT2A.

Functionally, may play a role in cell protection during the inflammatory response. In epithelial cells, negatively regulates IL6 production and apoptosis through the regulation of MT2A expression. The protein is Protein EOLA1 of Mus musculus (Mouse).